The primary structure comprises 262 residues: Acyl-[acyl-carrier-protein]--UDP-N-acetylglucosamine O-acyltransferase (262 aa).

This sequence belongs to the transferase hexapeptide repeat family. LpxA subfamily. In terms of assembly, homotrimer.

It is found in the cytoplasm. It carries out the reaction a (3R)-hydroxyacyl-[ACP] + UDP-N-acetyl-alpha-D-glucosamine = a UDP-3-O-[(3R)-3-hydroxyacyl]-N-acetyl-alpha-D-glucosamine + holo-[ACP]. The protein operates within glycolipid biosynthesis; lipid IV(A) biosynthesis; lipid IV(A) from (3R)-3-hydroxytetradecanoyl-[acyl-carrier-protein] and UDP-N-acetyl-alpha-D-glucosamine: step 1/6. Involved in the biosynthesis of lipid A, a phosphorylated glycolipid that anchors the lipopolysaccharide to the outer membrane of the cell. The chain is Acyl-[acyl-carrier-protein]--UDP-N-acetylglucosamine O-acyltransferase from Herminiimonas arsenicoxydans.